Consider the following 158-residue polypeptide: Ribosomal RNA large subunit methyltransferase H (158 aa).

Residues L76, G107, and 126–131 (LSGLTM) each bind S-adenosyl-L-methionine.

It belongs to the RNA methyltransferase RlmH family. Homodimer.

Its subcellular location is the cytoplasm. The catalysed reaction is pseudouridine(1915) in 23S rRNA + S-adenosyl-L-methionine = N(3)-methylpseudouridine(1915) in 23S rRNA + S-adenosyl-L-homocysteine + H(+). In terms of biological role, specifically methylates the pseudouridine at position 1915 (m3Psi1915) in 23S rRNA. The chain is Ribosomal RNA large subunit methyltransferase H from Teredinibacter turnerae (strain ATCC 39867 / T7901).